The following is a 606-amino-acid chain: Polyphenol oxidase A1, chloroplastic (606 aa).

The transit peptide at 1 to 92 (MTSISALSFI…TLATNPSALA (92 aa)) directs the protein to the chloroplast. Positions 32–63 (KQHQSSKLRKPKRQVTCSSNNNQNNPKEEQEL) are disordered. The span at 35-44 (QSSKLRKPKR) shows a compositional bias: basic residues. Disulfide bonds link Cys-103–Cys-121 and Cys-120–Cys-182. Residues His-181, His-202, His-211, His-333, His-337, and His-367 each contribute to the Cu cation site. Residues 185–202 (CDGAYSQIGFPDLKLQVH) constitute a cross-link (2'-(S-cysteinyl)-histidine (Cys-His)).

It belongs to the tyrosinase family. Requires Cu(2+) as cofactor.

It localises to the plastid. Its subcellular location is the chloroplast thylakoid lumen. It carries out the reaction 2 catechol + O2 = 2 1,2-benzoquinone + 2 H2O. Its function is as follows. Catalyzes the oxidation of mono- and o-diphenols to o-diquinones. The polypeptide is Polyphenol oxidase A1, chloroplastic (Vicia faba (Broad bean)).